Reading from the N-terminus, the 185-residue chain is Ribosomal RNA small subunit methyltransferase G (185 aa).

S-adenosyl-L-methionine is bound by residues Gly-59, Phe-64, 110-111 (IQ), and Arg-127.

This sequence belongs to the methyltransferase superfamily. RNA methyltransferase RsmG family.

The protein resides in the cytoplasm. The enzyme catalyses guanosine(527) in 16S rRNA + S-adenosyl-L-methionine = N(7)-methylguanosine(527) in 16S rRNA + S-adenosyl-L-homocysteine. In terms of biological role, specifically methylates the N7 position of guanine in position 527 of 16S rRNA. In Helicobacter hepaticus (strain ATCC 51449 / 3B1), this protein is Ribosomal RNA small subunit methyltransferase G.